The primary structure comprises 105 residues: uncharacterized protein (105 aa).

The protein belongs to the baculoviridae 11 kDa protein family.

This is an uncharacterized protein from Autographa californica nuclear polyhedrosis virus (AcMNPV).